Reading from the N-terminus, the 199-residue chain is MLLELSEEHKEHLAFLPQVDSAVVAEFGRIAVEFLRRGANPKIYEGAARKLNVSSDTVQHGVEGLTYLLTESSKLMISELDFQDSVFVLGFSEELNKLLLQLYLDNRKEIRTILSELAPSLPSYHNLEWRLDVQLASRSLRQQIKPAVTIKLHLNQNGDHNTKVLQTDPATLLHLVQQLEQALEEMKTNHCRRVVRNIK.

Residues 123–190 (SYHNLEWRLD…QALEEMKTNH (68 aa)) enclose the COMM domain.

Belongs to the COMM domain-containing protein 2 family. Component of the commander complex consisting of the CCC subcomplex and the retriever subcomplex. Component of the CCC (COMMD/CCDC22/CCDC93) subcomplex consisting of COMMD1, COMMD2, COMMD3, COMMD4, COMMD5, COMMD6, COMMD7, COMMD8, COMMD9, COMMD10, CCDC22 and CCDC93; within the complex forms a heterodimer with COMMD3. Interacts with RELA, RELB, NFKB1/p105, NFKB2/p100. Interacts with CCDC22, CCDC93, SCNN1B, CUL3, CUL4B, CUL5, CUL7. As to expression, ubiquitous.

It is found in the cytoplasm. Its function is as follows. Scaffold protein in the commander complex that is essential for endosomal recycling of transmembrane cargos; the commander complex is composed of the CCC subcomplex and the retriever subcomplex. May modulate activity of cullin-RING E3 ubiquitin ligase (CRL) complexes. May down-regulate activation of NF-kappa-B. This is COMM domain-containing protein 2 (COMMD2) from Homo sapiens (Human).